A 740-amino-acid chain; its full sequence is NAD(P)H-quinone oxidoreductase subunit 5, chloroplastic (740 aa).

16 consecutive transmembrane segments (helical) span residues 9-29 (WIIP…LILF), 40-60 (WAFQ…YLSI), 89-109 (IDPL…MVLI), 125-145 (FAYM…SNLI), 147-167 (IYIF…FWFT), 185-205 (GDFG…SFEF), 219-239 (NEVD…GAVA), 258-278 (TPIS…FLVA), 286-306 (VIPY…LLGA), 327-347 (LGYM…FHLI), 354-374 (ALLF…VGYS), 396-416 (ITFL…CFWS), 425-445 (WLYS…TAFY), 543-563 (LFPI…GIPF), 602-622 (VLSV…YKPI), and 717-737 (SYLF…YLLF).

This sequence belongs to the complex I subunit 5 family. NDH is composed of at least 16 different subunits, 5 of which are encoded in the nucleus.

The protein resides in the plastid. It is found in the chloroplast thylakoid membrane. The catalysed reaction is a plastoquinone + NADH + (n+1) H(+)(in) = a plastoquinol + NAD(+) + n H(+)(out). The enzyme catalyses a plastoquinone + NADPH + (n+1) H(+)(in) = a plastoquinol + NADP(+) + n H(+)(out). Its function is as follows. NDH shuttles electrons from NAD(P)H:plastoquinone, via FMN and iron-sulfur (Fe-S) centers, to quinones in the photosynthetic chain and possibly in a chloroplast respiratory chain. The immediate electron acceptor for the enzyme in this species is believed to be plastoquinone. Couples the redox reaction to proton translocation, and thus conserves the redox energy in a proton gradient. The polypeptide is NAD(P)H-quinone oxidoreductase subunit 5, chloroplastic (ndhF) (Nicotiana tomentosiformis (Tobacco)).